A 356-amino-acid chain; its full sequence is MSTTTDILPDVHTMRDTLQRLAPGTPLRDGLDRIVRGHTGALIVLGDEENVTSICDGGFEFDVTFAATRLRELCKMDGAVVLSSDGERIKRANVQLIPSPSWPTQESGTRHRSAERTALQTGVPVIAVSESQNTITLYVEGKSHILEEPSTLLNRANQALGTMERYRDRLDQVNTRLHMAELHNYATVIDVVSVIQREEMLRRVGETIDTNVLELGREAKQIQIQLTELRGDNDRERGYIIADYLVTDGIPTDETITEALEAVSGLDDKSLMKPSNIARILGLPPTEEALDEPVVPRGYRTLNRVPRVQKFLMDKLVGEFGNLHALTSASVEEISAVDGVGSLWARHITDGLARLT.

One can recognise a DAC domain in the interval 11 to 149; that stretch reads VHTMRDTLQR…EGKSHILEEP (139 aa). ATP-binding positions include G78, L96, and 109–113; that span reads TRHRS.

It belongs to the DisA family. Homooctamer. It depends on Mg(2+) as a cofactor.

The enzyme catalyses 2 ATP = 3',3'-c-di-AMP + 2 diphosphate. Participates in a DNA-damage check-point. DisA forms globular foci that rapidly scan along the chromosomes searching for lesions. In terms of biological role, also has diadenylate cyclase activity, catalyzing the condensation of 2 ATP molecules into cyclic di-AMP (c-di-AMP). c-di-AMP likely acts as a signaling molecule that may couple DNA integrity with a cellular process. The polypeptide is DNA integrity scanning protein DisA (Corynebacterium efficiens (strain DSM 44549 / YS-314 / AJ 12310 / JCM 11189 / NBRC 100395)).